Reading from the N-terminus, the 311-residue chain is Terpentetriene synthase (311 aa).

Positions aspartate 77 to aspartate 81 match the DDXXD motif motif.

It belongs to the terpene synthase family. In terms of assembly, homodimer. The cofactor is Mg(2+).

It catalyses the reaction terpentedienyl diphosphate = terpentetriene + diphosphate. Its pathway is antibiotic biosynthesis. Its function is as follows. Involved in the production of the isoprenoid antibiotic terpentecin. Converts terpentedienol diphosphate (TDP) into terpentetriene (TTE). Can also accept geranylgeranyl diphosphate (GGDP) and farnesyl diphosphate (FDP) as substrates. The sequence is that of Terpentetriene synthase (cyc2) from Kitasatospora griseola (Streptomyces griseolosporeus).